The following is a 490-amino-acid chain: GTPase Der (490 aa).

EngA-type G domains follow at residues 3 to 166 and 196 to 369; these read PVIA…PKDE and IKIA…KSAV. Residues 9–16, 56–60, 118–121, 202–209, 249–253, and 314–317 contribute to the GTP site; these read GRPNVGKS, DTGGI, NKID, DTAGV, and NKWD. The 85-residue stretch at 370 to 454 folds into the KH-like domain; sequence TRWPTSRLTQ…PIRIEFKGGE (85 aa). A disordered region spans residues 452-490; the sequence is GGENPYEGNKNTLTDRQVNKKRRMMSHHKKADKKRRDKR. A compositionally biased stretch (basic residues) spans 470–490; the sequence is NKKRRMMSHHKKADKKRRDKR.

This sequence belongs to the TRAFAC class TrmE-Era-EngA-EngB-Septin-like GTPase superfamily. EngA (Der) GTPase family. As to quaternary structure, associates with the 50S ribosomal subunit.

Functionally, GTPase that plays an essential role in the late steps of ribosome biogenesis. This is GTPase Der from Pseudomonas savastanoi pv. phaseolicola (strain 1448A / Race 6) (Pseudomonas syringae pv. phaseolicola (strain 1448A / Race 6)).